We begin with the raw amino-acid sequence, 452 residues long: Tripartite motif-containing protein 49D (452 aa).

An RING-type zinc finger spans residues 15–56; it reads CPICLNYFIDPVTIDCGHSFCRPCFYLNWQDIPILTQCFECL. The B box-type zinc-finger motif lies at 88–129; it reads SEEQMCGTHRETKKIFCEVDRSLLCLLCSSSLEHRYHRHCPA. Positions 93, 96, 115, and 121 each coordinate Zn(2+). Residues 269 to 452 enclose the B30.2/SPRY domain; the sequence is ELRAGPITGL…LRPIFCCVHL (184 aa).

It belongs to the TRIM/RBCC family.

This Homo sapiens (Human) protein is Tripartite motif-containing protein 49D.